Consider the following 302-residue polypeptide: Glutamate/aspartate import solute-binding protein (302 aa).

Positions 1-22 (MQLRKPATAILALALSAGLAQA) are cleaved as a signal peptide.

It belongs to the bacterial solute-binding protein 3 family. The complex is composed of two ATP-binding proteins (GltL), two transmembrane proteins (GltJ and GltK) and a solute-binding protein (GltI).

It localises to the periplasm. In terms of biological role, part of the ABC transporter complex GltIJKL involved in glutamate and aspartate uptake. Binds to both glutamate and aspartate. This Escherichia coli (strain K12) protein is Glutamate/aspartate import solute-binding protein (gltI).